Consider the following 375-residue polypeptide: 2-isopropylmalate synthase (375 aa).

Residues 1-124 form the Pyruvate carboxyltransferase domain; the sequence is GRTSIDNLCR…FTNIKHNELY (124 aa). The Mn(2+) site is built by histidine 59, histidine 61, and asparagine 95. The tract at residues 250-375 is regulatory domain; sequence QLKYFSIHSG…SKIKNIKNKK (126 aa).

This sequence belongs to the alpha-IPM synthase/homocitrate synthase family. LeuA type 1 subfamily. In terms of assembly, homodimer.

The protein resides in the cytoplasm. The catalysed reaction is 3-methyl-2-oxobutanoate + acetyl-CoA + H2O = (2S)-2-isopropylmalate + CoA + H(+). It functions in the pathway amino-acid biosynthesis; L-leucine biosynthesis; L-leucine from 3-methyl-2-oxobutanoate: step 1/4. In terms of biological role, catalyzes the condensation of the acetyl group of acetyl-CoA with 3-methyl-2-oxobutanoate (2-ketoisovalerate) to form 3-carboxy-3-hydroxy-4-methylpentanoate (2-isopropylmalate). In Buchnera aphidicola subsp. Thelaxes suberi, this protein is 2-isopropylmalate synthase.